A 137-amino-acid chain; its full sequence is Phosphoribosyl-AMP cyclohydrolase (137 aa).

Asp-84 serves as a coordination point for Mg(2+). Cys-85 serves as a coordination point for Zn(2+). Mg(2+) contacts are provided by Asp-86 and Asp-88. 2 residues coordinate Zn(2+): Cys-101 and Cys-108.

Belongs to the PRA-CH family. Homodimer. Mg(2+) is required as a cofactor. It depends on Zn(2+) as a cofactor.

It localises to the cytoplasm. It carries out the reaction 1-(5-phospho-beta-D-ribosyl)-5'-AMP + H2O = 1-(5-phospho-beta-D-ribosyl)-5-[(5-phospho-beta-D-ribosylamino)methylideneamino]imidazole-4-carboxamide. Its pathway is amino-acid biosynthesis; L-histidine biosynthesis; L-histidine from 5-phospho-alpha-D-ribose 1-diphosphate: step 3/9. Catalyzes the hydrolysis of the adenine ring of phosphoribosyl-AMP. The chain is Phosphoribosyl-AMP cyclohydrolase from Chlorobium chlorochromatii (strain CaD3).